Consider the following 400-residue polypeptide: Mu-type opioid receptor (400 aa).

The Extracellular portion of the chain corresponds to 1 to 68 (MDSSAVPTNA…CPPTGSPSMI (68 aa)). N-linked (GlcNAc...) asparagine glycans are attached at residues asparagine 9, asparagine 12, asparagine 33, asparagine 40, and asparagine 48. A helical transmembrane segment spans residues 69–93 (TAITIMALYSIVCVVGLFGNFLVMY). Residues 94-106 (VIVRYTKMKTATN) lie on the Cytoplasmic side of the membrane. The helical transmembrane segment at 107 to 131 (IYIFNLALADALVTSTLPFQSVNYL) threads the bilayer. Residues 132–142 (MGTWPFGTILC) lie on the Extracellular side of the membrane. Cysteine 142 and cysteine 219 are joined by a disulfide. A helical transmembrane segment spans residues 143–165 (KIVISIDYYNMSTSIFTLCTMSV). Residues 166-185 (DRYIAVCHPVKALDFRTPRN) lie on the Cytoplasmic side of the membrane. Residue tyrosine 168 is modified to Phosphotyrosine. A helical transmembrane segment spans residues 186–207 (AKIINVCNWILSSAIGLPVMFM). Topologically, residues 208–230 (ATTKYRQGSIDCTLTFSHPSWYW) are extracellular. Residues 231-255 (ENLLKICVFIFAFIMPVLIITVCYG) traverse the membrane as a helical segment. Residues 256-283 (LMILRLKSVRMLSGSKEKDRNLRRITRM) are Cytoplasmic-facing. The chain crosses the membrane as a helical span at residues 284 to 306 (VLVVVAVFIICWTPIHIYVIIKA). Residues 307–314 (LVTIPETT) are Extracellular-facing. Residues 315-338 (FQTVSWHFCIALGYTNSCLNPVLY) form a helical membrane-spanning segment. An NPxxY; plays a role in stabilizing the activated conformation of the receptor motif is present at residues 334–338 (NPVLY). The Cytoplasmic portion of the chain corresponds to 339–400 (AFLDEDFKRC…NLEAETAPLP (62 aa)). Residue cysteine 353 is the site of S-palmitoyl cysteine attachment. Positions 364–386 (NSTRIRQNTRDHPSTANTVDRTN) are disordered. Serine 365 is modified (phosphoserine). Threonine 372 is subject to Phosphothreonine. Serine 377 bears the Phosphoserine mark. Residue threonine 396 is modified to Phosphothreonine.

The protein belongs to the G-protein coupled receptor 1 family. Forms homooligomers and heterooligomers with other GPCRs, such as OPRD1, OPRK1, OPRL1, NPFFR2, ADRA2A, SSTR2, CNR1 and CCR5 (probably in dimeric forms). Interacts with heterotrimeric G proteins; interaction with a heterotrimeric complex containing GNAI1, GNB1 and GNG2 stabilizes the active conformation of the receptor and increases its affinity for endomorphin-2, the synthetic opioid peptide DAMGO and for morphinan agonists. Interacts with PPL; the interaction disrupts agonist-mediated G-protein activation. Interacts (via C-terminus) with DNAJB4 (via C-terminus). Interacts with calmodulin; the interaction inhibits the constitutive activity of OPRM1; it abolishes basal and attenuates agonist-stimulated G-protein coupling. Interacts with FLNA, PLD2, RANBP9 and WLS and GPM6A. Interacts with RTP4. Interacts with SYP and GNAS. Interacts with RGS9, RGS17, RGS20, RGS4, PPP1R9B and HINT1. In terms of processing, phosphorylated. Differentially phosphorylated in basal and agonist-induced conditions. Agonist-mediated phosphorylation modulates receptor internalization. Phosphorylated by GRK2 in a agonist-dependent manner. Phosphorylation at Tyr-168 requires receptor activation, is dependent on non-receptor protein tyrosine kinase Src and results in a decrease in agonist efficacy by reducing G-protein coupling efficiency. Phosphorylated on tyrosine residues; the phosphorylation is involved in agonist-induced G-protein-independent receptor down-regulation. Phosphorylation at Ser-377 is involved in G-protein-dependent but not beta-arrestin-dependent activation of the ERK pathway. Ubiquitinated. A basal ubiquitination seems not to be related to degradation. Ubiquitination is increased upon formation of OPRM1:OPRD1 oligomers leading to proteasomal degradation; the ubiquitination is diminished by RTP4.

The protein localises to the cell membrane. Its subcellular location is the cell projection. It localises to the axon. The protein resides in the perikaryon. It is found in the dendrite. The protein localises to the endosome. Its function is as follows. Receptor for endogenous opioids such as beta-endorphin and endomorphin. Receptor for natural and synthetic opioids including morphine, heroin, DAMGO, fentanyl, etorphine, buprenorphin and methadone. Also activated by enkephalin peptides, such as Met-enkephalin or Met-enkephalin-Arg-Phe, with higher affinity for Met-enkephalin-Arg-Phe. Agonist binding to the receptor induces coupling to an inactive GDP-bound heterotrimeric G-protein complex and subsequent exchange of GDP for GTP in the G-protein alpha subunit leading to dissociation of the G-protein complex with the free GTP-bound G-protein alpha and the G-protein beta-gamma dimer activating downstream cellular effectors. The agonist- and cell type-specific activity is predominantly coupled to pertussis toxin-sensitive G(i) and G(o) G alpha proteins, GNAI1, GNAI2, GNAI3 and GNAO1, and to a lesser extent to pertussis toxin-insensitive G alpha proteins GNAZ and GNA15. They mediate an array of downstream cellular responses, including inhibition of adenylate cyclase activity and both N-type and L-type calcium channels, activation of inward rectifying potassium channels, mitogen-activated protein kinase (MAPK), phospholipase C (PLC), phosphoinositide/protein kinase (PKC), phosphoinositide 3-kinase (PI3K) and regulation of NF-kappa-B. Also couples to adenylate cyclase stimulatory G alpha proteins. The selective temporal coupling to G-proteins and subsequent signaling can be regulated by RGSZ proteins, such as RGS9, RGS17 and RGS4. Phosphorylation by members of the GPRK subfamily of Ser/Thr protein kinases and association with beta-arrestins is involved in short-term receptor desensitization. Beta-arrestins associate with the GPRK-phosphorylated receptor and uncouple it from the G-protein thus terminating signal transduction. The phosphorylated receptor is internalized through endocytosis via clathrin-coated pits which involves beta-arrestins. The activation of the ERK pathway occurs either in a G-protein-dependent or a beta-arrestin-dependent manner and is regulated by agonist-specific receptor phosphorylation. Acts as a class A G-protein coupled receptor (GPCR) which dissociates from beta-arrestin at or near the plasma membrane and undergoes rapid recycling. Receptor down-regulation pathways are varying with the agonist and occur dependent or independent of G-protein coupling. Endogenous ligands induce rapid desensitization, endocytosis and recycling. Heterooligomerization with other GPCRs can modulate agonist binding, signaling and trafficking properties. Involved in neurogenesis. This chain is Mu-type opioid receptor (OPRM1), found in Macaca mulatta (Rhesus macaque).